The following is a 255-amino-acid chain: Testis-specific H1 histone (255 aa).

Positions 1–54 (MEQALTGEAQSRWPRRGGSGAMAEAPGPSGESRGHSATQLPAEKTVGGPSRGCS) are disordered. Ser56 carries the phosphoserine modification. Over residues 124–134 (KVPKPRRKPGR) the composition is skewed to basic residues. A disordered region spans residues 124–255 (KVPKPRRKPG…PKKPAQRTIQ (132 aa)). Residues 142 to 152 (RAPWRTPAAPR) show a composition bias toward low complexity. 2 stretches are compositionally biased toward basic residues: residues 153–166 (SSRRRRQPLRKAAR) and 174–194 (RNARAKAKANARARRTRRARP). 2 stretches are compositionally biased toward basic and acidic residues: residues 195 to 230 (RAKEPPCARAKEEAGATAADEGRGQAVKEDTTPRSG) and 238 to 248 (KPREEKQEPKK).

This sequence belongs to the histone H1/H5 family. Testis-specific.

It is found in the nucleus. Its subcellular location is the chromosome. In terms of biological role, essential for normal spermatogenesis and male fertility. Required for proper cell restructuring and DNA condensation during the elongation phase of spermiogenesis. Involved in the histone-protamine transition of sperm chromatin and the subsequent production of functional sperm. Binds both double-stranded and single-stranded DNA, ATP and protamine-1. The protein is Testis-specific H1 histone of Homo sapiens (Human).